The following is a 385-amino-acid chain: MNTEFTLTQKRALAILTLIALLFGAYFLRNYFVLIVVAAVGAYLFTPLFKWFTKRFNTGLSAACTLLSALAAVVVPVGALVGLAIVQIARMVDSVADWVRTTDLSTLGDKILQFVNGLFDRVPFLHITVTADALRKAMISVAQNVGEWLLHFLRDAAGSLAGVITSAIIFVYVFVALLVNREKLRTLIGQLNPLGEDVTDLYLQKMGSMVRGTVNGQFVIAACQGVAGAASIYIAGFHHGFFIFAIVLTALSIIPLGGGIVTIPFGIGMIFYGNIAGGIFVLLWHLLVVTNIDNVLRPILVPRDARLNSALMLLSVFAGITMFGPWGIIIGPVLMILIVTTIDVYLAVYKGVELEQFEAPPVRRRWLPRRGPATSRNAPPPSTAE.

A run of 8 helical transmembrane segments spans residues 7 to 27, 32 to 52, 66 to 86, 159 to 179, 218 to 238, 241 to 261, 263 to 283, and 319 to 339; these read LTQKRALAILTLIALLFGAYF, FVLIVVAAVGAYLFTPLFKWF, LLSALAAVVVPVGALVGLAIV, SLAGVITSAIIFVYVFVALLV, FVIAACQGVAGAASIYIAGFH, FFIFAIVLTALSIIPLGGGIV, IPFGIGMIFYGNIAGGIFVLL, and GITMFGPWGIIIGPVLMILIV.

It belongs to the autoinducer-2 exporter (AI-2E) (TC 2.A.86) family.

It localises to the cell membrane. The protein is Putative transport protein MT1133 of Mycobacterium tuberculosis (strain CDC 1551 / Oshkosh).